We begin with the raw amino-acid sequence, 842 residues long: Outer membrane usher protein AggC (842 aa).

Residues 1–21 form the signal peptide; the sequence is MKTSSFIIVILLCFRIENVIA. Cysteine 819 and cysteine 841 are joined by a disulfide.

The protein belongs to the fimbrial export usher family.

The protein localises to the cell outer membrane. Functionally, involved in the export and assembly of the AAF/I fimbriae subunits across the outer membrane. The sequence is that of Outer membrane usher protein AggC (aggC) from Escherichia coli.